A 326-amino-acid chain; its full sequence is Vitamin B12 import system permease protein BtuC (326 aa).

9 consecutive transmembrane segments (helical) span residues 15 to 35 (WLLS…CAGE), 61 to 81 (LAVL…QALF), 88 to 108 (PGLL…VLLG), 112 to 132 (LPGW…TLIL), 146 to 166 (LLAG…AIYF), 184 to 204 (GGVD…LIWI), 240 to 260 (GWMV…GLVI), 274 to 294 (VLLP…DVVA), and 302 to 322 (ELPI…WLLL).

The protein belongs to the binding-protein-dependent transport system permease family. FecCD subfamily. The complex is composed of two ATP-binding proteins (BtuD), two transmembrane proteins (BtuC) and a solute-binding protein (BtuF).

Its subcellular location is the cell inner membrane. Its function is as follows. Part of the ABC transporter complex BtuCDF involved in vitamin B12 import. Involved in the translocation of the substrate across the membrane. This is Vitamin B12 import system permease protein BtuC from Salmonella choleraesuis (strain SC-B67).